The following is a 339-amino-acid chain: Deoxyhypusine hydroxylase (339 aa).

HEAT-like PBS-type repeat units lie at residues 71-97 and 104-130; these read LKHELAYCLGQTRNPDAVSYLLEVVKN and CRHEAAEGLGALGFDTSLDVLKALRDD. Fe cation is bound by residues histidine 73, glutamate 74, histidine 106, and glutamate 107. A disordered region spans residues 159–183; the sequence is EKLKPSDFTSIDPAPPLPMASSQPS. HEAT-like PBS-type repeat units follow at residues 200–233, 238–264, and 271–298; these read QRYRAMFALRDLASPPDLPTAVEAVEALAKGLKD, FRHEVAFVFGQLCHPASVPSLTETLSD, and VRHEAAEALGSLGDVEGVEDTLKKFLND. Histidine 240, glutamate 241, histidine 273, and glutamate 274 together coordinate Fe cation.

This sequence belongs to the deoxyhypusine hydroxylase family. Fe(2+) serves as cofactor.

The protein resides in the cytoplasm. Its subcellular location is the nucleus. The catalysed reaction is [eIF5A protein]-deoxyhypusine + AH2 + O2 = [eIF5A protein]-hypusine + A + H2O. It functions in the pathway protein modification; eIF5A hypusination. In terms of biological role, catalyzes the hydroxylation of the N(6)-(4-aminobutyl)-L-lysine intermediate to form hypusine, an essential post-translational modification only found in mature eIF-5A factor. The chain is Deoxyhypusine hydroxylase (lia1) from Aspergillus oryzae (strain ATCC 42149 / RIB 40) (Yellow koji mold).